The sequence spans 461 residues: Argininosuccinate lyase (461 aa).

It belongs to the lyase 1 family. Argininosuccinate lyase subfamily.

It is found in the cytoplasm. It carries out the reaction 2-(N(omega)-L-arginino)succinate = fumarate + L-arginine. It functions in the pathway amino-acid biosynthesis; L-arginine biosynthesis; L-arginine from L-ornithine and carbamoyl phosphate: step 3/3. This is Argininosuccinate lyase from Nitrosomonas eutropha (strain DSM 101675 / C91 / Nm57).